We begin with the raw amino-acid sequence, 626 residues long: DNA mismatch repair protein MutL (626 aa).

The interval 352-399 (QPPSPSFTSRPSSAGYASGSWHPAVSSPRTEWSPQTAHPAHRPLDLGA) is disordered. The segment covering 378-387 (SPRTEWSPQT) has biased composition (polar residues).

The protein belongs to the DNA mismatch repair MutL/HexB family.

Functionally, this protein is involved in the repair of mismatches in DNA. It is required for dam-dependent methyl-directed DNA mismatch repair. May act as a 'molecular matchmaker', a protein that promotes the formation of a stable complex between two or more DNA-binding proteins in an ATP-dependent manner without itself being part of a final effector complex. The polypeptide is DNA mismatch repair protein MutL (Brucella anthropi (strain ATCC 49188 / DSM 6882 / CCUG 24695 / JCM 21032 / LMG 3331 / NBRC 15819 / NCTC 12168 / Alc 37) (Ochrobactrum anthropi)).